The primary structure comprises 92 residues: Small ribosomal subunit protein uS19 (92 aa).

This sequence belongs to the universal ribosomal protein uS19 family.

Functionally, protein S19 forms a complex with S13 that binds strongly to the 16S ribosomal RNA. The chain is Small ribosomal subunit protein uS19 from Malacoplasma penetrans (strain HF-2) (Mycoplasma penetrans).